Reading from the N-terminus, the 834-residue chain is Leucine--tRNA ligase (834 aa).

The short motif at 36–46 (PYPSGKIHVGH) is the 'HIGH' region element. The short motif at 602–606 (KMSKS) is the 'KMSKS' region element. Lys-605 lines the ATP pocket.

This sequence belongs to the class-I aminoacyl-tRNA synthetase family.

It localises to the cytoplasm. The enzyme catalyses tRNA(Leu) + L-leucine + ATP = L-leucyl-tRNA(Leu) + AMP + diphosphate. The chain is Leucine--tRNA ligase from Rickettsia canadensis (strain McKiel).